Reading from the N-terminus, the 55-residue chain is Omega-ctenitoxin-Pr2a (55 aa).

Disulfide bonds link cysteine 2-cysteine 16, cysteine 9-cysteine 22, cysteine 15-cysteine 37, cysteine 24-cysteine 35, and cysteine 45-cysteine 52.

In terms of tissue distribution, expressed by the venom gland.

It is found in the secreted. Its function is as follows. Antagonist of L-type calcium channels (Cav1/CACNA1). In vivo, causes paralysis in posterior limbs, and gradual decrease in movement and aggression during 24 hours after intracerebroventricular injection in mice at dose levels of 3 ug per mouse. This is Omega-ctenitoxin-Pr2a from Phoneutria reidyi (Brazilian Amazonian armed spider).